Consider the following 372-residue polypeptide: Putative glutamate--cysteine ligase 2 (372 aa).

It belongs to the glutamate--cysteine ligase type 2 family. YbdK subfamily. As to quaternary structure, homodimer.

It catalyses the reaction L-cysteine + L-glutamate + ATP = gamma-L-glutamyl-L-cysteine + ADP + phosphate + H(+). Its function is as follows. ATP-dependent carboxylate-amine ligase which exhibits weak glutamate--cysteine ligase activity. This is Putative glutamate--cysteine ligase 2 (ybdK) from Escherichia coli O81 (strain ED1a).